The chain runs to 314 residues: MASVFLPALGGVAVCGGTHGNELSGVYLVQEMERQRKEKGDGVWPIPVTTVLSNPRAVKECRRYIDTDMNRCFSRDTLSTPITDSSPYEVRRAQELNNQLGPKESTGAIDMICDLHNTTSNMGLTLIHYTTSDWATLHICKYLQTKITKVPVRVMVLDVPYSDAYSLESVSKHGFSIEVGPQPHGVVRADIYVIMKEAVDLTIDWIHKFNSGTVFEGGDVEAFKIIKSVDYPRDPVTRSLNAAVHPQLQDRDFCLLKRGDPLFLSFSGETVKYEEEEPLHPLFINECAYYEKGIAFHLAKRMRLTIPAVQVQKD.

Zn(2+)-binding residues include His-19 and Glu-22. Substrate contacts are provided by residues Arg-63 and 70 to 71 (NR). His-116 provides a ligand contact to Zn(2+). Positions 178 and 289 each coordinate substrate.

Belongs to the AspA/AstE family. Aspartoacylase subfamily. In terms of assembly, homotetramer. Zn(2+) is required as a cofactor.

It localises to the apical cell membrane. The protein localises to the cytoplasm. The catalysed reaction is an N-acyl-aromatic L-alpha-amino acid + H2O = an aromatic L-alpha-amino acid + a carboxylate. It catalyses the reaction an N-acetyl-L-cysteine-S-conjugate + H2O = an S-substituted L-cysteine + acetate. In terms of biological role, plays an important role in deacetylating mercapturic acids in kidney proximal tubules. In Danio rerio (Zebrafish), this protein is N-acyl-aromatic-L-amino acid amidohydrolase (carboxylate-forming) B (acy3.2).